Consider the following 326-residue polypeptide: Homoserine kinase (326 aa).

The protein belongs to the pseudomonas-type ThrB family.

The catalysed reaction is L-homoserine + ATP = O-phospho-L-homoserine + ADP + H(+). It functions in the pathway amino-acid biosynthesis; L-threonine biosynthesis; L-threonine from L-aspartate: step 4/5. This chain is Homoserine kinase, found in Sinorhizobium medicae (strain WSM419) (Ensifer medicae).